We begin with the raw amino-acid sequence, 138 residues long: Small ribosomal subunit protein uS11 (138 aa).

Positions 1–12 (MPPKKAAASSAK) are enriched in low complexity. A disordered region spans residues 1–28 (MPPKKAAASSAKKGQKTRRREKKNVPHG). Residues 13–22 (KGQKTRRREK) show a composition bias toward basic residues.

It belongs to the universal ribosomal protein uS11 family. As to quaternary structure, part of the 30S ribosomal subunit. Interacts with proteins S7 and S18. Binds to IF-3.

Functionally, located on the platform of the 30S subunit, it bridges several disparate RNA helices of the 16S rRNA. Forms part of the Shine-Dalgarno cleft in the 70S ribosome. The protein is Small ribosomal subunit protein uS11 of Mycobacterium sp. (strain JLS).